A 246-amino-acid polypeptide reads, in one-letter code: Thaumatin-like protein 1a (246 aa).

The signal sequence occupies residues 1 to 24 (MMKSQVASLLGLTLAILFFSGAHA). Intrachain disulfides connect cysteine 33–cysteine 245, cysteine 81–cysteine 91, cysteine 96–cysteine 103, cysteine 151–cysteine 234, cysteine 156–cysteine 217, cysteine 164–cysteine 180, cysteine 184–cysteine 193, and cysteine 194–cysteine 204.

Belongs to the thaumatin family.

The protein resides in the secreted. The protein is Thaumatin-like protein 1a (TL1) of Malus domestica (Apple).